A 151-amino-acid polypeptide reads, in one-letter code: Transcriptional repressor NrdR (151 aa).

A zinc finger lies at 3-34 (CPYCAYGESKVVDSRSTEDGSSIRRRRECLKC). Positions 49-139 (ILVIKKNMSR…VYRQFKDINT (91 aa)) constitute an ATP-cone domain.

Belongs to the NrdR family. Zn(2+) is required as a cofactor.

In terms of biological role, negatively regulates transcription of bacterial ribonucleotide reductase nrd genes and operons by binding to NrdR-boxes. The protein is Transcriptional repressor NrdR of Clostridium botulinum (strain Loch Maree / Type A3).